We begin with the raw amino-acid sequence, 500 residues long: Abscisic acid 8'-hydroxylase 3 (500 aa).

A helical transmembrane segment spans residues 3–23; sequence ASFVIVIVISFFISLAFMCYV. Heme is bound at residue C426.

The protein belongs to the cytochrome P450 family. Requires heme as cofactor.

It is found in the membrane. The catalysed reaction is 2-cis-(+)-abscisate + reduced [NADPH--hemoprotein reductase] + O2 = (+)-8'-hydroxyabscisate + oxidized [NADPH--hemoprotein reductase] + H2O + H(+). It functions in the pathway plant hormone degradation; abscisic acid degradation. Involved in the oxidative degradation of abscisic acid. In Oryza sativa subsp. japonica (Rice), this protein is Abscisic acid 8'-hydroxylase 3 (CYP707A7).